A 98-amino-acid chain; its full sequence is NADH-ubiquinone oxidoreductase chain 4L (98 aa).

The next 3 membrane-spanning stretches (helical) occupy residues 2 to 22, 29 to 49, and 61 to 81; these read PSISTNITLAFITALLGMLIF, SLLCLEGMMLSMFILSTLTIL, and ILLLVFAACEAAVGLALLVTV.

The protein belongs to the complex I subunit 4L family. In terms of assembly, core subunit of respiratory chain NADH dehydrogenase (Complex I) which is composed of 45 different subunits.

Its subcellular location is the mitochondrion inner membrane. It catalyses the reaction a ubiquinone + NADH + 5 H(+)(in) = a ubiquinol + NAD(+) + 4 H(+)(out). In terms of biological role, core subunit of the mitochondrial membrane respiratory chain NADH dehydrogenase (Complex I) which catalyzes electron transfer from NADH through the respiratory chain, using ubiquinone as an electron acceptor. Part of the enzyme membrane arm which is embedded in the lipid bilayer and involved in proton translocation. In Hapalemur aureus (Golden bamboo lemur), this protein is NADH-ubiquinone oxidoreductase chain 4L (MT-ND4L).